Here is a 598-residue protein sequence, read N- to C-terminus: Aspartate--tRNA ligase (598 aa).

E173 provides a ligand contact to L-aspartate. The aspartate stretch occupies residues 197-200; it reads QLFK. L-aspartate is bound at residue R219. Residues 219-221 and Q228 each bind ATP; that span reads RDE. Position 449 (H449) interacts with L-aspartate. Position 483 (E483) interacts with ATP. Residue R490 participates in L-aspartate binding. Residue 535–538 participates in ATP binding; the sequence is GLDR.

This sequence belongs to the class-II aminoacyl-tRNA synthetase family. Type 1 subfamily. As to quaternary structure, homodimer.

The protein resides in the cytoplasm. It carries out the reaction tRNA(Asp) + L-aspartate + ATP = L-aspartyl-tRNA(Asp) + AMP + diphosphate. Catalyzes the attachment of L-aspartate to tRNA(Asp) in a two-step reaction: L-aspartate is first activated by ATP to form Asp-AMP and then transferred to the acceptor end of tRNA(Asp). This chain is Aspartate--tRNA ligase, found in Shewanella halifaxensis (strain HAW-EB4).